The following is a 143-amino-acid chain: Nucleoside diphosphate kinase (143 aa).

ATP contacts are provided by K11, F59, R87, T93, R104, and N114. The active-site Pros-phosphohistidine intermediate is H117.

This sequence belongs to the NDK family. As to quaternary structure, homotetramer. Mg(2+) is required as a cofactor.

Its subcellular location is the cytoplasm. The catalysed reaction is a 2'-deoxyribonucleoside 5'-diphosphate + ATP = a 2'-deoxyribonucleoside 5'-triphosphate + ADP. It carries out the reaction a ribonucleoside 5'-diphosphate + ATP = a ribonucleoside 5'-triphosphate + ADP. Major role in the synthesis of nucleoside triphosphates other than ATP. The ATP gamma phosphate is transferred to the NDP beta phosphate via a ping-pong mechanism, using a phosphorylated active-site intermediate. This chain is Nucleoside diphosphate kinase, found in Pseudoalteromonas atlantica (strain T6c / ATCC BAA-1087).